Consider the following 382-residue polypeptide: L-arabinitol 4-dehydrogenase (382 aa).

Zn(2+) contacts are provided by Cys55, His80, Glu81, Cys110, Cys113, Cys116, Cys124, and Glu165. NAD(+)-binding positions include 192–193, Asp213, Arg218, Ile293, and 317–319; these read PI and QYR.

The protein belongs to the zinc-containing alcohol dehydrogenase family. Homotetramer. Zn(2+) serves as cofactor.

The catalysed reaction is L-arabinitol + NAD(+) = L-xylulose + NADH + H(+). It participates in carbohydrate degradation; L-arabinose degradation via L-arabinitol; D-xylulose 5-phosphate from L-arabinose (fungal route): step 2/5. Its function is as follows. Catalyzes the NAD-dependent oxidation of L-arabinitol to L-xylulose in the fungal L-arabinose catabolic pathway. L-arabinose catabolism is important for using plant material as a carbon source. Also active on ribitol and xylitol. Not active with NADP as cosubstrate. The protein is L-arabinitol 4-dehydrogenase (ladA) of Aspergillus oryzae (Yellow koji mold).